The chain runs to 132 residues: uncharacterized protein (132 aa).

A run of 2 helical transmembrane segments spans residues 12–32 (VIGFVVLFCVLELVFYLKKLY) and 37–57 (LTLAVFGIFSLLFFLLYIPVL).

The protein resides in the cell membrane. This is an uncharacterized protein from Methanocaldococcus jannaschii (strain ATCC 43067 / DSM 2661 / JAL-1 / JCM 10045 / NBRC 100440) (Methanococcus jannaschii).